The chain runs to 485 residues: Arginine/ornithine antiporter ArcD (485 aa).

11 helical membrane passes run 23–43 (ALLP…LLGL), 48–68 (PLLW…GYTW), 79–99 (IVMG…IASW), 116–136 (LTPA…ATAI), 148–168 (IALV…AGAI), 203–223 (MFPN…VLGL), 246–266 (GTYT…GLAI), 269–289 (YPAL…SILI), 323–343 (LEGS…GGIL), 362–382 (SVGG…ALTA), and 441–461 (VLSY…VVIM).

It belongs to the NhaC Na(+)/H(+) (TC 2.A.35) antiporter family.

Its subcellular location is the cell membrane. It carries out the reaction L-ornithine(in) + L-arginine(out) = L-ornithine(out) + L-arginine(in). Uptake of arginine from the medium in exchange for ornithine. The polypeptide is Arginine/ornithine antiporter ArcD (arcD) (Halobacterium salinarum (strain ATCC 700922 / JCM 11081 / NRC-1) (Halobacterium halobium)).